The sequence spans 65 residues: Omega-lycotoxin-Am1f (65 aa).

Positions 1–18 (GDEEDEVEETLPVAEEGR) are excised as a propeptide. 4 disulfides stabilise this stretch: Cys-22/Cys-37, Cys-29/Cys-42, Cys-36/Cys-62, and Cys-44/Cys-60.

This sequence belongs to the neurotoxin omega-lctx family. Expressed by the venom gland.

The protein resides in the secreted. Functionally, modulates Cav2.1/CACNA1A voltage-gated calcium channels (P/Q-type currents) in rat cerebellar Purkinje cells and hippocampal CA1-CA3 neurons. At saturating concentrations (&gt;10 nM) decelerates activation kinetics and slightly increases peak amplitude without affecting deactivation kinetics. In vivo, does not cause death when intravenously injected into mice. In rat models, through its activity on Cav2.1/CACNA1A, has an ameliorative effect on memory defects provoked by hyperstimulation of N-methyl-D-aspartate receptors (NMDARs) in the hippocampus. In Alopecosa marikovskyi (Wolf spider), this protein is Omega-lycotoxin-Am1f.